Reading from the N-terminus, the 285-residue chain is S-methyl-5'-thioadenosine phosphorylase (285 aa).

Phosphate is bound by residues S10, 52 to 53 (RH), and 85 to 86 (TA). M188 contributes to the substrate binding site. T189 lines the phosphate pocket. 212–214 (DYD) provides a ligand contact to substrate.

This sequence belongs to the PNP/MTAP phosphorylase family. MTAP subfamily. Homotrimer.

It localises to the cytoplasm. It is found in the nucleus. The catalysed reaction is S-methyl-5'-thioadenosine + phosphate = 5-(methylsulfanyl)-alpha-D-ribose 1-phosphate + adenine. It participates in amino-acid biosynthesis; L-methionine biosynthesis via salvage pathway; S-methyl-5-thio-alpha-D-ribose 1-phosphate from S-methyl-5'-thioadenosine (phosphorylase route): step 1/1. Catalyzes the reversible phosphorylation of S-methyl-5'-thioadenosine (MTA) to adenine and 5-methylthioribose-1-phosphate. Involved in the breakdown of MTA, a major by-product of polyamine biosynthesis. Responsible for the first step in the methionine salvage pathway after MTA has been generated from S-adenosylmethionine. Has broad substrate specificity with 6-aminopurine nucleosides as preferred substrates. The chain is S-methyl-5'-thioadenosine phosphorylase from Caenorhabditis briggsae.